The following is a 269-amino-acid chain: 4-hydroxy-tetrahydrodipicolinate reductase (269 aa).

9-14 (GVAGRM) lines the NAD(+) pocket. NADP(+) is bound at residue Arg36. NAD(+) is bound by residues 99–101 (GTT) and 123–126 (APNM). The Proton donor/acceptor role is filled by His156. A (S)-2,3,4,5-tetrahydrodipicolinate-binding site is contributed by His157. Lys160 functions as the Proton donor in the catalytic mechanism. Residue 166–167 (GT) coordinates (S)-2,3,4,5-tetrahydrodipicolinate.

This sequence belongs to the DapB family.

The protein localises to the cytoplasm. It carries out the reaction (S)-2,3,4,5-tetrahydrodipicolinate + NAD(+) + H2O = (2S,4S)-4-hydroxy-2,3,4,5-tetrahydrodipicolinate + NADH + H(+). The catalysed reaction is (S)-2,3,4,5-tetrahydrodipicolinate + NADP(+) + H2O = (2S,4S)-4-hydroxy-2,3,4,5-tetrahydrodipicolinate + NADPH + H(+). It participates in amino-acid biosynthesis; L-lysine biosynthesis via DAP pathway; (S)-tetrahydrodipicolinate from L-aspartate: step 4/4. Catalyzes the conversion of 4-hydroxy-tetrahydrodipicolinate (HTPA) to tetrahydrodipicolinate. The sequence is that of 4-hydroxy-tetrahydrodipicolinate reductase from Methylococcus capsulatus (strain ATCC 33009 / NCIMB 11132 / Bath).